The chain runs to 908 residues: NADH-quinone oxidoreductase subunit G (908 aa).

In terms of domain architecture, 2Fe-2S ferredoxin-type spans 2–83; sequence ATIHVDGKEY…GTFISIDDEE (82 aa). [2Fe-2S] cluster-binding residues include Cys34, Cys45, Cys48, and Cys67. In terms of domain architecture, 4Fe-4S His(Cys)3-ligated-type spans 83-122; that stretch reads EAKQFRESVVEWLMTNHPHDCPVCEEGGNCHLQDMTVMTG. [4Fe-4S] cluster contacts are provided by His99, Cys103, Cys106, Cys112, Cys151, Cys154, Cys157, Cys201, Cys228, Cys231, Cys235, and Cys263. The 57-residue stretch at 221 to 277 folds into the 4Fe-4S Mo/W bis-MGD-type domain; sequence MQFAPSICQQCSIGCNISPGERYGELRRIENRYNGTVNHYFLCDRGRFGYGYVNLKD.

It belongs to the complex I 75 kDa subunit family. As to quaternary structure, composed of 13 different subunits. Subunits NuoCD, E, F, and G constitute the peripheral sector of the complex. Requires [2Fe-2S] cluster as cofactor. [4Fe-4S] cluster is required as a cofactor.

It catalyses the reaction a quinone + NADH + 5 H(+)(in) = a quinol + NAD(+) + 4 H(+)(out). NDH-1 shuttles electrons from NADH, via FMN and iron-sulfur (Fe-S) centers, to quinones in the respiratory chain. The immediate electron acceptor for the enzyme in this species is believed to be ubiquinone. Couples the redox reaction to proton translocation (for every two electrons transferred, four hydrogen ions are translocated across the cytoplasmic membrane), and thus conserves the redox energy in a proton gradient. In Escherichia coli O6:H1 (strain CFT073 / ATCC 700928 / UPEC), this protein is NADH-quinone oxidoreductase subunit G (nuoG).